Reading from the N-terminus, the 401-residue chain is Argininosuccinate synthase (401 aa).

9 to 17 (AYSGGLDTS) serves as a coordination point for ATP. Position 86 (Tyr-86) interacts with L-citrulline. ATP is bound at residue Gly-116. L-aspartate-binding residues include Thr-118, Asn-122, and Asp-123. Asn-122 is an L-citrulline binding site. Positions 126, 174, 183, 259, and 271 each coordinate L-citrulline.

It belongs to the argininosuccinate synthase family. Type 1 subfamily. Homotetramer.

It is found in the cytoplasm. It catalyses the reaction L-citrulline + L-aspartate + ATP = 2-(N(omega)-L-arginino)succinate + AMP + diphosphate + H(+). Its pathway is amino-acid biosynthesis; L-arginine biosynthesis; L-arginine from L-ornithine and carbamoyl phosphate: step 2/3. The chain is Argininosuccinate synthase from Bacillus thuringiensis subsp. konkukian (strain 97-27).